Here is a 493-residue protein sequence, read N- to C-terminus: GTPase Der (493 aa).

The EngA-type G 1 domain occupies 3–166 (PVIALVGRPN…EALGIFPKDN (164 aa)). GTP contacts are provided by residues 9-16 (GRPNVGKS), 56-60 (DTGGI), and 118-121 (NKVD). Residues 166 to 195 (NAEEEGEGEPASEEVAEGEEPTRIPGPSEK) form a disordered region. Residues 167–184 (AEEEGEGEPASEEVAEGE) are compositionally biased toward acidic residues. The region spanning 198-371 (IKIAIIGRPN…SVQESFRSAV (174 aa)) is the EngA-type G 2 domain. GTP is bound by residues 204–211 (GRPNVGKS), 251–255 (DTAGV), and 316–319 (NKWD). One can recognise a KH-like domain in the interval 372–456 (TRWPTSRLTS…PIRIEYKGGE (85 aa)). A compositionally biased stretch (basic and acidic residues) spans 454–463 (GGENPYEGKK). The disordered stretch occupies residues 454–493 (GGENPYEGKKNSLTARQVNKKRRLMSHHKKAEKKKKDKRR). Basic residues predominate over residues 471–493 (VNKKRRLMSHHKKAEKKKKDKRR).

It belongs to the TRAFAC class TrmE-Era-EngA-EngB-Septin-like GTPase superfamily. EngA (Der) GTPase family. As to quaternary structure, associates with the 50S ribosomal subunit.

GTPase that plays an essential role in the late steps of ribosome biogenesis. This is GTPase Der from Pseudomonas aeruginosa (strain ATCC 15692 / DSM 22644 / CIP 104116 / JCM 14847 / LMG 12228 / 1C / PRS 101 / PAO1).